The primary structure comprises 101 residues: MIPGEVMPADGTIELNAGAQAVTLEVSNTGDRPIQVGSHYHFGEANGALDFDRDAARGMRLDIAAGTAVRFEPGQTREVRLVPYGGARRVFGFNQTVMGDL.

This sequence belongs to the urease beta subunit family. As to quaternary structure, heterotrimer of UreA (gamma), UreB (beta) and UreC (alpha) subunits. Three heterotrimers associate to form the active enzyme.

The protein localises to the cytoplasm. It carries out the reaction urea + 2 H2O + H(+) = hydrogencarbonate + 2 NH4(+). The protein operates within nitrogen metabolism; urea degradation; CO(2) and NH(3) from urea (urease route): step 1/1. The protein is Urease subunit beta of Jannaschia sp. (strain CCS1).